A 604-amino-acid chain; its full sequence is Aspartate--tRNA(Asp/Asn) ligase (604 aa).

Glu-175 is a binding site for L-aspartate. The tract at residues 199–202 (QQFK) is aspartate. L-aspartate-binding residues include Arg-221 and His-456. 221–223 (RDE) provides a ligand contact to ATP. Glu-496 is an ATP binding site. Residue Arg-503 coordinates L-aspartate. ATP is bound at residue 548 to 551 (GVDR).

The protein belongs to the class-II aminoacyl-tRNA synthetase family. Type 1 subfamily. Homodimer.

The protein resides in the cytoplasm. The catalysed reaction is tRNA(Asx) + L-aspartate + ATP = L-aspartyl-tRNA(Asx) + AMP + diphosphate. Its function is as follows. Aspartyl-tRNA synthetase with relaxed tRNA specificity since it is able to aspartylate not only its cognate tRNA(Asp) but also tRNA(Asn). Reaction proceeds in two steps: L-aspartate is first activated by ATP to form Asp-AMP and then transferred to the acceptor end of tRNA(Asp/Asn). This chain is Aspartate--tRNA(Asp/Asn) ligase, found in Methylobacterium nodulans (strain LMG 21967 / CNCM I-2342 / ORS 2060).